Here is a 434-residue protein sequence, read N- to C-terminus: Innexin-14 (434 aa).

4 helical membrane-spanning segments follow: residues 30–50, 106–126, 301–321, and 365–385; these read LFTV…QHFG, WVPF…WCWA, IFIG…IGTV, and YLCA…GFLK.

It belongs to the pannexin family.

It is found in the cell membrane. Its subcellular location is the cell junction. It localises to the gap junction. Its function is as follows. Structural component of the gap junctions. This is Innexin-14 (inx-14) from Caenorhabditis elegans.